A 487-amino-acid chain; its full sequence is Aspartyl/glutamyl-tRNA(Asn/Gln) amidotransferase subunit B (487 aa).

The protein belongs to the GatB/GatE family. GatB subfamily. In terms of assembly, heterotrimer of A, B and C subunits.

It carries out the reaction L-glutamyl-tRNA(Gln) + L-glutamine + ATP + H2O = L-glutaminyl-tRNA(Gln) + L-glutamate + ADP + phosphate + H(+). The catalysed reaction is L-aspartyl-tRNA(Asn) + L-glutamine + ATP + H2O = L-asparaginyl-tRNA(Asn) + L-glutamate + ADP + phosphate + 2 H(+). Allows the formation of correctly charged Asn-tRNA(Asn) or Gln-tRNA(Gln) through the transamidation of misacylated Asp-tRNA(Asn) or Glu-tRNA(Gln) in organisms which lack either or both of asparaginyl-tRNA or glutaminyl-tRNA synthetases. The reaction takes place in the presence of glutamine and ATP through an activated phospho-Asp-tRNA(Asn) or phospho-Glu-tRNA(Gln). This chain is Aspartyl/glutamyl-tRNA(Asn/Gln) amidotransferase subunit B, found in Roseiflexus sp. (strain RS-1).